The primary structure comprises 78 residues: Large ribosomal subunit protein bL28 (78 aa).

Positions 1–25 (MSRVCQVTGKRPAVGNNRSHAKNAT) are disordered.

It belongs to the bacterial ribosomal protein bL28 family.

This chain is Large ribosomal subunit protein bL28, found in Aliivibrio fischeri (strain ATCC 700601 / ES114) (Vibrio fischeri).